We begin with the raw amino-acid sequence, 223 residues long: Uridylate kinase (223 aa).

An ATP-binding site is contributed by 9 to 10; that stretch reads GS. Residue glycine 43 coordinates UMP. The ATP site is built by glycine 44 and arginine 48. UMP contacts are provided by residues aspartate 65 and 112-118; that span reads THPGHTT. Positions 137, 138, 143, and 146 each coordinate ATP.

This sequence belongs to the UMP kinase family. Homohexamer.

The protein localises to the cytoplasm. The catalysed reaction is UMP + ATP = UDP + ADP. It functions in the pathway pyrimidine metabolism; CTP biosynthesis via de novo pathway; UDP from UMP (UMPK route): step 1/1. Its activity is regulated as follows. Inhibited by UTP. In terms of biological role, catalyzes the reversible phosphorylation of UMP to UDP. The chain is Uridylate kinase from Methanopyrus kandleri (strain AV19 / DSM 6324 / JCM 9639 / NBRC 100938).